The following is a 381-amino-acid chain: Lysophosphatidylserine lipase ABHD12 (381 aa).

Residues 1–58 (MRKRNESVTVEHERAAAAPAPLDKGCSLRHSLRLPAADTGMKRPLGRRHGLWFRLRRL) lie on the Cytoplasmic side of the membrane. Residues 59 to 79 (IIWLLGVYIAIPFLVKLCPAI) traverse the membrane as a helical segment. The Extracellular segment spans residues 80-381 (QAKLVFLNFV…LGIPEHEHHH (302 aa)). An N-linked (GlcNAc...) asparagine glycan is attached at Asn106. Catalysis depends on Ser229, which acts as the Nucleophile. Residues Asp316 and His355 each act as charge relay system in the active site.

Belongs to the serine esterase family.

The protein resides in the endoplasmic reticulum membrane. The catalysed reaction is 1-(9Z-octadecenoyl)-sn-glycero-3-phospho-L-serine + H2O = sn-glycero-3-phospho-L-serine + (9Z)-octadecenoate + H(+). It catalyses the reaction 1-(9Z-octadecenoyl)-sn-glycero-3-phospho-(1'-sn-glycerol) + H2O = sn-glycero-3-phospho-(1'-sn-glycerol) + (9Z)-octadecenoate + H(+). It carries out the reaction 1-(9Z-octadecenoyl)-sn-glycero-3-phospho-(1D-myo-inositol) + H2O = sn-glycero-3-phospho-1D-myo-inositol + (9Z)-octadecenoate + H(+). The enzyme catalyses 1-(9Z-octadecenoyl)-sn-glycero-3-phosphoethanolamine + H2O = sn-glycero-3-phosphoethanolamine + (9Z)-octadecenoate + H(+). The catalysed reaction is 1-(9Z-octadecenoyl)-sn-glycero-3-phosphocholine + H2O = 1-(9Z-octadecenoyl)-sn-glycerol + phosphocholine + H(+). It catalyses the reaction 2-(9Z-octadecenoyl)-glycerol + H2O = glycerol + (9Z)-octadecenoate + H(+). It carries out the reaction 1-hexadecanoyl-sn-glycero-3-phospho-L-serine + H2O = sn-glycero-3-phospho-L-serine + hexadecanoate + H(+). The enzyme catalyses 2-(5Z,8Z,11Z,14Z-eicosatetraenoyl)-glycerol + H2O = glycerol + (5Z,8Z,11Z,14Z)-eicosatetraenoate + H(+). The catalysed reaction is Hydrolyzes glycerol monoesters of long-chain fatty acids.. It catalyses the reaction 1-decanoylglycerol + H2O = decanoate + glycerol + H(+). It carries out the reaction 1-dodecanoylglycerol + H2O = dodecanoate + glycerol + H(+). The enzyme catalyses 1-tetradecanoylglycerol + H2O = tetradecanoate + glycerol + H(+). The catalysed reaction is 2-hexadecanoylglycerol + H2O = glycerol + hexadecanoate + H(+). It catalyses the reaction 1-(9Z-octadecenoyl)-glycerol + H2O = glycerol + (9Z)-octadecenoate + H(+). It carries out the reaction 2-(9Z,12Z-octadecadienoyl)-glycerol + H2O = (9Z,12Z)-octadecadienoate + glycerol + H(+). The enzyme catalyses 1-(5Z,8Z,11Z,14Z-eicosatetraenoyl)-glycerol + H2O = glycerol + (5Z,8Z,11Z,14Z)-eicosatetraenoate + H(+). The catalysed reaction is 1-(9Z,12Z-octadecadienoyl)-glycerol + H2O = (9Z,12Z)-octadecadienoate + glycerol + H(+). It catalyses the reaction 1-hexadecanoylglycerol + H2O = glycerol + hexadecanoate + H(+). It carries out the reaction 1-octadecanoylglycerol + H2O = octadecanoate + glycerol + H(+). The enzyme catalyses 1-octadecanoyl-2-(9,10-epoxyoctadecanoyl)-sn-glycero-3-phospho-L-serine + H2O = 9,10-epoxyoctadecanoate + 1-octadecanoyl-sn-glycero-3-phosphoserine + H(+). The catalysed reaction is 1-octadecanoyl-2-(10-hydroxyoctadecanoyl)-sn-glycero-3-phospho-L-serine + H2O = 1-octadecanoyl-sn-glycero-3-phosphoserine + 10-hydroxyoctadecanoate + H(+). It catalyses the reaction 1-hexadecanoyl-2-(10-hydroxyoctadecanoyl)-sn-glycero-3-phospho-L-serine + H2O = 10-hydroxyoctadecanoate + 1-hexadecanoyl-sn-glycero-3-phospho-L-serine + H(+). In terms of biological role, lysophosphatidylserine (LPS) lipase that mediates the hydrolysis of lysophosphatidylserine, a class of signaling lipids that regulates immunological and neurological processes. Represents a major lysophosphatidylserine lipase in the brain, thereby playing a key role in the central nervous system. Also able to hydrolyze oxidized phosphatidylserine; oxidized phosphatidylserine is produced in response to severe inflammatory stress and constitutes a proapoptotic 'eat me' signal. Also has monoacylglycerol (MAG) lipase activity: hydrolyzes 2-arachidonoylglycerol (2-AG), thereby acting as a regulator of endocannabinoid signaling pathways. Has a strong preference for very-long-chain lipid substrates; substrate specificity is likely due to improved catalysis and not improved substrate binding. This chain is Lysophosphatidylserine lipase ABHD12, found in Gallus gallus (Chicken).